The sequence spans 311 residues: Asialoglycoprotein receptor 2 (311 aa).

A disordered region spans residues 1 to 44 (MAKDFQDIQQLSSEENDHPFHQGEGPGTRRLNPRRGNPFLKGPP). Residues 1–58 (MAKDFQDIQQLSSEENDHPFHQGEGPGTRRLNPRRGNPFLKGPPPAQPLAQRLCSMVC) are Cytoplasmic-facing. Positions 5–8 (FQDI) match the Endocytosis signal motif. Ser13 is modified (phosphoserine). Cys54 carries S-palmitoyl cysteine lipidation. A helical; Signal-anchor for type II membrane protein membrane pass occupies residues 59 to 79 (FSLLALSFNILLLVVICVTGS). The Extracellular segment spans residues 80 to 311 (QSEGHGGAQL…KRRNATGEVA (232 aa)). N-linked (GlcNAc...) asparagine glycans are attached at residues Asn102 and Asn170. The C-type lectin domain occupies 176-302 (CCPVNWVEHQ…LQVYRWVCEK (127 aa)). 3 disulfides stabilise this stretch: Cys177-Cys188, Cys205-Cys300, and Cys278-Cys292. Asn305 is a glycosylation site (N-linked (GlcNAc...) asparagine).

As to quaternary structure, the functioning ligand-binding unit of this receptor is thought to be at least a dimer. Interacts with LASS2. In terms of assembly, (Microbial infection) Interacts with hepatitis E virus capsid protein ORF2. Expressed exclusively in hepatic parenchymal cells.

The protein localises to the membrane. In terms of biological role, mediates the endocytosis of plasma glycoproteins to which the terminal sialic acid residue on their complex carbohydrate moieties has been removed. The receptor recognizes terminal galactose and N-acetylgalactosamine units. After ligand binding to the receptor, the resulting complex is internalized and transported to a sorting organelle, where receptor and ligand are disassociated. The receptor then returns to the cell membrane surface. The sequence is that of Asialoglycoprotein receptor 2 (ASGR2) from Homo sapiens (Human).